Consider the following 38-residue polypeptide: Photosystem I reaction center subunit IX (38 aa).

A helical membrane pass occupies residues 4 to 24 (FLTTAPVVAAIWFTATAGILI).

Belongs to the PsaJ family.

Its subcellular location is the cellular thylakoid membrane. In terms of biological role, may help in the organization of the PsaE and PsaF subunits. This is Photosystem I reaction center subunit IX from Synechococcus sp. (strain CC9902).